The primary structure comprises 199 residues: Recombination protein RecR (199 aa).

The segment at 58–73 (CKICFNITDKEVCDIC) adopts a C4-type zinc-finger fold. The region spanning 81 to 176 (STICVVSHPM…KVTRIAHGIP (96 aa)) is the Toprim domain.

Belongs to the RecR family.

Functionally, may play a role in DNA repair. It seems to be involved in an RecBC-independent recombinational process of DNA repair. It may act with RecF and RecO. The polypeptide is Recombination protein RecR (Caldanaerobacter subterraneus subsp. tengcongensis (strain DSM 15242 / JCM 11007 / NBRC 100824 / MB4) (Thermoanaerobacter tengcongensis)).